The sequence spans 150 residues: S-protein homolog 24 (150 aa).

N-linked (GlcNAc...) asparagine glycosylation occurs at Asn-122.

It belongs to the plant self-incompatibility (S1) protein family.

It is found in the secreted. The polypeptide is S-protein homolog 24 (Arabidopsis thaliana (Mouse-ear cress)).